A 57-amino-acid chain; its full sequence is UPF0391 membrane protein RPD_2934 (57 aa).

A run of 2 helical transmembrane segments spans residues 6–26 (WALI…TGVS) and 35–55 (ILFY…FTIF).

This sequence belongs to the UPF0391 family.

The protein localises to the cell membrane. The protein is UPF0391 membrane protein RPD_2934 of Rhodopseudomonas palustris (strain BisB5).